The primary structure comprises 156 residues: Ribosome maturation factor RimP (156 aa).

The protein belongs to the RimP family.

Its subcellular location is the cytoplasm. Required for maturation of 30S ribosomal subunits. The chain is Ribosome maturation factor RimP from Fusobacterium nucleatum subsp. nucleatum (strain ATCC 25586 / DSM 15643 / BCRC 10681 / CIP 101130 / JCM 8532 / KCTC 2640 / LMG 13131 / VPI 4355).